A 281-amino-acid polypeptide reads, in one-letter code: MSTYLVGDVHGCLVELKALLAQVSFNPEQDTLWLTGDLVARGPDSLQVLRFVRSLGSAVRMVLGNHDLHLLAVYAGISRNKPKDRISDLLTAPDADELINWLRRQPILQVDDDLKLVMAHAGITPQWDLPTAQMCAREVEAILSSDSYPLFLDAMYGDMPNHWSPELSGLARLRFSTNVFTRMRYCFSGGQLDMLCKEPPSQAPSLLKPWFDLPSQVAGEYAIAFGHWASLEGKGTPENIYALDTGCCWGGELTMLRWDDKRYFTQSSLSSNTESSGDIAL.

Belongs to the Ap4A hydrolase family.

The enzyme catalyses P(1),P(4)-bis(5'-adenosyl) tetraphosphate + H2O = 2 ADP + 2 H(+). Hydrolyzes diadenosine 5',5'''-P1,P4-tetraphosphate to yield ADP. The chain is Bis(5'-nucleosyl)-tetraphosphatase, symmetrical from Pectobacterium carotovorum subsp. carotovorum (strain PC1).